Reading from the N-terminus, the 116-residue chain is Protein lin-52 homolog (116 aa).

Residues serine 28 and serine 53 each carry the phosphoserine modification.

The protein belongs to the lin-52 family. In terms of assembly, component of the DREAM complex (also named LINC complex) at least composed of E2F4, E2F5, LIN9, LIN37, LIN52, LIN54, MYBL1, MYBL2, RBL1, RBL2, RBBP4, TFDP1 and TFDP2. The complex exists in quiescent cells where it represses cell cycle-dependent genes. It dissociates in S phase when LIN9, LIN37, LIN52 and LIN54 form a subcomplex that binds to MYBL2.

This chain is Protein lin-52 homolog (LIN52), found in Homo sapiens (Human).